A 214-amino-acid chain; its full sequence is Octanoyltransferase (214 aa).

One can recognise a BPL/LPL catalytic domain in the interval 29 to 214; the sequence is SETLDEIWVL…QHLQKQLIPS (186 aa). Substrate contacts are provided by residues 69–76, 146–148, and 159–161; these read RGGEITYH, ALG, and GLA. Cys-177 acts as the Acyl-thioester intermediate in catalysis.

Belongs to the LipB family.

The protein localises to the cytoplasm. The catalysed reaction is octanoyl-[ACP] + L-lysyl-[protein] = N(6)-octanoyl-L-lysyl-[protein] + holo-[ACP] + H(+). Its pathway is protein modification; protein lipoylation via endogenous pathway; protein N(6)-(lipoyl)lysine from octanoyl-[acyl-carrier-protein]: step 1/2. In terms of biological role, catalyzes the transfer of endogenously produced octanoic acid from octanoyl-acyl-carrier-protein onto the lipoyl domains of lipoate-dependent enzymes. Lipoyl-ACP can also act as a substrate although octanoyl-ACP is likely to be the physiological substrate. The protein is Octanoyltransferase of Polynucleobacter necessarius subsp. necessarius (strain STIR1).